The chain runs to 41 residues: Giant hemoglobin AI chain (41 aa).

Residues 2–41 (DCGMLQRIKVKQQWASVYSSGIAREDFGEAIWKAVFALAP) enclose the Globin domain.

It belongs to the globin family. As to quaternary structure, giant hemoglobin is composed of four heme-containing chains (AI to AIV), and two linker chains (AV and AVI).

This chain is Giant hemoglobin AI chain, found in Lamellibrachia sp. (Deep-sea giant tube worm).